The primary structure comprises 162 residues: tRNA (cytidine(34)-2'-O)-methyltransferase (162 aa).

The S-adenosyl-L-methionine site is built by Leu80, Gly102, Leu124, and Ser132.

Belongs to the class IV-like SAM-binding methyltransferase superfamily. RNA methyltransferase TrmH family. TrmL subfamily. In terms of assembly, homodimer.

It is found in the cytoplasm. It catalyses the reaction cytidine(34) in tRNA + S-adenosyl-L-methionine = 2'-O-methylcytidine(34) in tRNA + S-adenosyl-L-homocysteine + H(+). The catalysed reaction is 5-carboxymethylaminomethyluridine(34) in tRNA(Leu) + S-adenosyl-L-methionine = 5-carboxymethylaminomethyl-2'-O-methyluridine(34) in tRNA(Leu) + S-adenosyl-L-homocysteine + H(+). Methylates the ribose at the nucleotide 34 wobble position in the two leucyl isoacceptors tRNA(Leu)(CmAA) and tRNA(Leu)(cmnm5UmAA). Catalyzes the methyl transfer from S-adenosyl-L-methionine to the 2'-OH of the wobble nucleotide. This Acidovorax sp. (strain JS42) protein is tRNA (cytidine(34)-2'-O)-methyltransferase.